Reading from the N-terminus, the 502-residue chain is Probable malate:quinone oxidoreductase (502 aa).

It belongs to the MQO family. FAD serves as cofactor.

The enzyme catalyses (S)-malate + a quinone = a quinol + oxaloacetate. The protein operates within carbohydrate metabolism; tricarboxylic acid cycle; oxaloacetate from (S)-malate (quinone route): step 1/1. In Synechococcus sp. (strain CC9902), this protein is Probable malate:quinone oxidoreductase.